We begin with the raw amino-acid sequence, 402 residues long: Bone morphogenetic protein 8A (402 aa).

The N-terminal stretch at Met1 to Gly19 is a signal peptide. The propeptide occupies Gly20–Arg263. Residues Asn158 and Asn343 are each glycosylated (N-linked (GlcNAc...) asparagine). 3 disulfide bridges follow: Cys301–Cys367, Cys330–Cys399, and Cys334–Cys401.

Belongs to the TGF-beta family. In terms of assembly, homodimer; disulfide-linked.

The protein resides in the secreted. In terms of biological role, induces cartilage and bone formation. May be the osteoinductive factor responsible for the phenomenon of epithelial osteogenesis. Plays a role in calcium regulation and bone homeostasis. Signaling protein involved in regulation of thermogenesis and energy balance. Proposed to increase the peripheral response of brown adipose tissue (BAT) to adrenergic stimulation while acting centrally in the hypothalamus to increase sympathetic output to BAT. Growth factor of the TGF-beta superfamily that plays important role in various biological processes, including spermatogenesis, osteogenesis, steroidogenesis as well as regulation of energy balance. Initiates the canonical BMP signaling cascade by associating with type I receptor BMPR1A and type II receptor BMPR2. Once all three components are bound together in a complex at the cell surface, BMPR2 phosphorylates and activates BMPR1A. In turn, BMPR1A propagates signal by phosphorylating SMAD1/5/8 that travel to the nucleus and act as activators and repressors of transcription of target genes. In addition, activates the SMAD2/3 pathway. The polypeptide is Bone morphogenetic protein 8A (BMP8A) (Homo sapiens (Human)).